Here is a 544-residue protein sequence, read N- to C-terminus: Cytochrome P450 82A1 (544 aa).

Cysteine 481 lines the heme pocket.

It belongs to the cytochrome P450 family. Requires heme as cofactor.

Its subcellular location is the membrane. The sequence is that of Cytochrome P450 82A1 (CYP82A1) from Pisum sativum (Garden pea).